A 207-amino-acid chain; its full sequence is Ribonuclease HII (207 aa).

The 190-residue stretch at 18 to 207 folds into the RNase H type-2 domain; that stretch reads GLVAGVDEAG…VAEVLREALP (190 aa). A divalent metal cation-binding residues include Asp24, Glu25, and Asp116.

This sequence belongs to the RNase HII family. Mn(2+) is required as a cofactor. Mg(2+) serves as cofactor.

The protein localises to the cytoplasm. It catalyses the reaction Endonucleolytic cleavage to 5'-phosphomonoester.. Its function is as follows. Endonuclease that specifically degrades the RNA of RNA-DNA hybrids. The polypeptide is Ribonuclease HII (Albidiferax ferrireducens (strain ATCC BAA-621 / DSM 15236 / T118) (Rhodoferax ferrireducens)).